Here is a 404-residue protein sequence, read N- to C-terminus: Cysteine desulfurase IscS (404 aa).

Residues 75-76, N155, Q183, and 203-205 contribute to the pyridoxal 5'-phosphate site; these read AT and SSH. K206 bears the N6-(pyridoxal phosphate)lysine mark. T243 contributes to the pyridoxal 5'-phosphate binding site. C328 (cysteine persulfide intermediate) is an active-site residue. C328 is a [2Fe-2S] cluster binding site.

This sequence belongs to the class-V pyridoxal-phosphate-dependent aminotransferase family. NifS/IscS subfamily. In terms of assembly, homodimer. Forms a heterotetramer with IscU, interacts with other sulfur acceptors. Pyridoxal 5'-phosphate is required as a cofactor.

The protein localises to the cytoplasm. The catalysed reaction is (sulfur carrier)-H + L-cysteine = (sulfur carrier)-SH + L-alanine. Its pathway is cofactor biosynthesis; iron-sulfur cluster biosynthesis. Master enzyme that delivers sulfur to a number of partners involved in Fe-S cluster assembly, tRNA modification or cofactor biosynthesis. Catalyzes the removal of elemental sulfur atoms from cysteine to produce alanine. Functions as a sulfur delivery protein for Fe-S cluster synthesis onto IscU, an Fe-S scaffold assembly protein, as well as other S acceptor proteins. This chain is Cysteine desulfurase IscS, found in Histophilus somni (strain 129Pt) (Haemophilus somnus).